Reading from the N-terminus, the 442-residue chain is Protein translocase subunit SecY (442 aa).

Transmembrane regions (helical) follow at residues 24–44 (FLFL…PGIN), 76–96 (IFAL…LMTA), 125–145 (VLAL…GVAF), 149–169 (FGFY…MMWL), 178–198 (VGNG…PRAI), 212–232 (IFAL…VVFI), 269–289 (VIPA…GSWF), 312–332 (NILL…ALMF), 363–383 (GVLT…CLLP), and 385–405 (FLVV…LIVV).

Belongs to the SecY/SEC61-alpha family. Component of the Sec protein translocase complex. Heterotrimer consisting of SecY, SecE and SecG subunits. The heterotrimers can form oligomers, although 1 heterotrimer is thought to be able to translocate proteins. Interacts with the ribosome. Interacts with SecDF, and other proteins may be involved. Interacts with SecA.

The protein resides in the cell inner membrane. Functionally, the central subunit of the protein translocation channel SecYEG. Consists of two halves formed by TMs 1-5 and 6-10. These two domains form a lateral gate at the front which open onto the bilayer between TMs 2 and 7, and are clamped together by SecE at the back. The channel is closed by both a pore ring composed of hydrophobic SecY resides and a short helix (helix 2A) on the extracellular side of the membrane which forms a plug. The plug probably moves laterally to allow the channel to open. The ring and the pore may move independently. The protein is Protein translocase subunit SecY of Pseudomonas aeruginosa (strain ATCC 15692 / DSM 22644 / CIP 104116 / JCM 14847 / LMG 12228 / 1C / PRS 101 / PAO1).